Here is a 312-residue protein sequence, read N- to C-terminus: Tyrosine recombinase XerC (312 aa).

The 103-residue stretch at 1-103 folds into the Core-binding (CB) domain; the sequence is MISAFYAFLD…AIKSFSQYCI (103 aa). Residues 124 to 306 form the Tyr recombinase domain; the sequence is ELPSPITYEQ…SMKLKKQTHE (183 aa). Residues arginine 164, lysine 188, histidine 258, arginine 261, and histidine 284 contribute to the active site. Tyrosine 293 (O-(3'-phospho-DNA)-tyrosine intermediate) is an active-site residue.

It belongs to the 'phage' integrase family. XerC subfamily. In terms of assembly, forms a cyclic heterotetrameric complex composed of two molecules of XerC and two molecules of XerD.

It is found in the cytoplasm. In terms of biological role, site-specific tyrosine recombinase, which acts by catalyzing the cutting and rejoining of the recombining DNA molecules. The XerC-XerD complex is essential to convert dimers of the bacterial chromosome into monomers to permit their segregation at cell division. It also contributes to the segregational stability of plasmids. In Chlamydia caviae (strain ATCC VR-813 / DSM 19441 / 03DC25 / GPIC) (Chlamydophila caviae), this protein is Tyrosine recombinase XerC.